Here is a 574-residue protein sequence, read N- to C-terminus: ESX-1 secretion system protein EccA1 (574 aa).

335 to 342 is an ATP binding site; the sequence is GPPGTGKT.

It belongs to the CbxX/CfxQ family. Part of the ESX-1 / type VII secretion system (T7SS), which is composed of cytosolic and membrane components.

It localises to the cytoplasm. Part of the ESX-1 / type VII specialized secretion system (T7SS), which exports several proteins including EsxA and EsxB. Plays a role in DNA conjugation, in both donor and recipient strains. EccA1 exhibits ATPase activity and may provide energy for the export of ESX-1 substrates. The polypeptide is ESX-1 secretion system protein EccA1 (Mycolicibacterium smegmatis (strain ATCC 700084 / mc(2)155) (Mycobacterium smegmatis)).